The sequence spans 88 residues: UPF0250 protein Sbal_3280 (88 aa).

It belongs to the UPF0250 family.

The chain is UPF0250 protein Sbal_3280 from Shewanella baltica (strain OS155 / ATCC BAA-1091).